Reading from the N-terminus, the 516-residue chain is 2-isopropylmalate synthase (516 aa).

Residues 5-267 form the Pyruvate carboxyltransferase domain; the sequence is VIIFDTTLRD…STNIVHKEIY (263 aa). Mn(2+)-binding residues include Asp-14, His-202, His-204, and Asn-238. The segment at 392–516 is regulatory domain; the sequence is YLKFFSVQSI…NKKLKNLKKY (125 aa).

This sequence belongs to the alpha-IPM synthase/homocitrate synthase family. LeuA type 1 subfamily. As to quaternary structure, homodimer. Mn(2+) serves as cofactor.

It is found in the cytoplasm. The enzyme catalyses 3-methyl-2-oxobutanoate + acetyl-CoA + H2O = (2S)-2-isopropylmalate + CoA + H(+). The protein operates within amino-acid biosynthesis; L-leucine biosynthesis; L-leucine from 3-methyl-2-oxobutanoate: step 1/4. Catalyzes the condensation of the acetyl group of acetyl-CoA with 3-methyl-2-oxobutanoate (2-ketoisovalerate) to form 3-carboxy-3-hydroxy-4-methylpentanoate (2-isopropylmalate). The polypeptide is 2-isopropylmalate synthase (Buchnera aphidicola subsp. Diuraphis noxia).